The sequence spans 360 residues: Peptide chain release factor 1 (360 aa).

N5-methylglutamine is present on Q235. The interval 284–313 (AKRQQAEASTRRNLLGSGDRSDRNRTYNFP) is disordered.

Belongs to the prokaryotic/mitochondrial release factor family. Post-translationally, methylated by PrmC. Methylation increases the termination efficiency of RF1.

It is found in the cytoplasm. Its function is as follows. Peptide chain release factor 1 directs the termination of translation in response to the peptide chain termination codons UAG and UAA. The sequence is that of Peptide chain release factor 1 from Citrobacter koseri (strain ATCC BAA-895 / CDC 4225-83 / SGSC4696).